A 397-amino-acid chain; its full sequence is L-asparaginase-like protein GD25160 (397 aa).

Positions 1 to 22 are cleaved as a signal peptide; sequence MLAQSCCLRLLILLLLFTSICS. Cystine bridges form between Cys-90–Cys-95, Cys-189–Cys-205, and Cys-344–Cys-371.

The protein belongs to the Ntn-hydrolase family.

This chain is L-asparaginase-like protein GD25160, found in Drosophila simulans (Fruit fly).